We begin with the raw amino-acid sequence, 521 residues long: Circadian clock oscillator protein KaiC (521 aa).

2 consecutive KaiC domains span residues 1–248 and 262–521; these read MNEP…INIF and ARIS…LDEE. Residues glycine 50, threonine 51, glycine 52, lysine 53, threonine 54, leucine 55, serine 90, lysine 225, leucine 226, arginine 227, threonine 229, histidine 231, threonine 241, threonine 291, glycine 292, threonine 293, glycine 294, lysine 295, threonine 296, and leucine 297 each coordinate ATP. Threonine 54 contacts Mg(2+). Position 296 (threonine 296) interacts with Mg(2+). Glutamate 319 contributes to the Mg(2+) binding site. Tryptophan 332 lines the ATP pocket. Residue serine 432 is modified to Phosphoserine; by autocatalysis. Phosphothreonine; by autocatalysis is present on threonine 433. 7 residues coordinate ATP: arginine 452, lysine 458, methionine 459, arginine 460, serine 462, histidine 464, and lysine 466.

Belongs to the KaiC family. As to quaternary structure, homohexamer; hexamerization is dependent on ATP-binding. The KaiABC complex composition changes during the circadian cycle to control KaiC phosphorylation. Complexes KaiC(6), KaiA(2-4):KaiC(6), KaiB(6):KaiC(6) and KaiC(6):KaiB(6):KaiA(12) are among the most important forms, many form cooperatively. KaiC interacts with SasA, activating its autokinase function and leading to RpaA activation. Mg(2+) is required as a cofactor. Phosphorylated on serine and threonine residues by autocatalysis. Has a 4 step phosphorylation cycle; the autokinase acts first on Thr-433, then Ser-432. When Ser-432 is modified KaiC switches to an autophosphatase mode, acting first on phospho-Thr-433 then phospho-Ser-432.

It carries out the reaction L-seryl-[protein] + ATP = O-phospho-L-seryl-[protein] + ADP + H(+). It catalyses the reaction L-threonyl-[protein] + ATP = O-phospho-L-threonyl-[protein] + ADP + H(+). The catalysed reaction is ATP + H2O = ADP + phosphate + H(+). Its activity is regulated as follows. The interaction with KaiA enhances its phosphorylation status, while the interaction with KaiB decreases it. Functionally, central component of the KaiABC oscillator complex, which constitutes the main circadian regulator in cyanobacteria. Complex composition changes during the circadian cycle to control KaiC phosphorylation. KaiA stimulates KaiC autophosphorylation, while KaiB sequesters KaiA, leading to KaiC autodephosphorylation. Clock output pathways impact the RpaA transcriptional regulator. KaiC enhances the autophosphorylation activity of SasA, which then transfers its phosphate group to RpaA to activate it. KaiB and KaiC together enhance the phospho-RpaA dephosphatase activity of CikA. Has a weak, temperature-independent ATPase activity; ATPase activity defines the circadian period. The phosphorylation state of KaiC modulates its ATPase activity and effects KaiB binding. This is Circadian clock oscillator protein KaiC from Rippkaea orientalis (strain PCC 8801 / RF-1) (Cyanothece sp. (strain PCC 8801)).